The chain runs to 290 residues: MAPANLPSIFNATSTDIEQLLAAQCHIGSKNLGVHMQPYLWKTRADGVNILNVGKTWEKIVLAARIIAAIDNPADICVISARPYGQRAVLKFAAHTGAQAIAGRFTPGSFTNYITRSFKEPRLIIVTDPRTDAQAIKEASYVNIPVIALCDADSPTEYVDVAIPTNNKGRHAIGCVWWMLAREVLRLRGTIYNRETPWDVMVDLYFYRDPEAEAEEKVEEEKLPGVEEEGVAAIESGFPATGDWEAAPAGFPATGEWSDAAPGAAAPNWDATAPATTADWAATEAKESSW.

The disordered stretch occupies residues 243 to 271 (DWEAAPAGFPATGEWSDAAPGAAAPNWDA). The segment covering 257 to 271 (WSDAAPGAAAPNWDA) has biased composition (low complexity).

It belongs to the universal ribosomal protein uS2 family. Component of the small ribosomal subunit (SSU). Mature N.crassa ribosomes consist of a small (40S) and a large (60S) subunit. The 40S small subunit contains 1 molecule of ribosomal RNA (18S rRNA) and at least 32 different proteins. The large 60S subunit contains 3 rRNA molecules (26S, 5.8S and 5S rRNA) and at least 42 different proteins. Interacts with rps21.

It localises to the cytoplasm. In terms of biological role, component of the ribosome, a large ribonucleoprotein complex responsible for the synthesis of proteins in the cell. The small ribosomal subunit (SSU) binds messenger RNAs (mRNAs) and translates the encoded message by selecting cognate aminoacyl-transfer RNA (tRNA) molecules. The large subunit (LSU) contains the ribosomal catalytic site termed the peptidyl transferase center (PTC), which catalyzes the formation of peptide bonds, thereby polymerizing the amino acids delivered by tRNAs into a polypeptide chain. The nascent polypeptides leave the ribosome through a tunnel in the LSU and interact with protein factors that function in enzymatic processing, targeting, and the membrane insertion of nascent chains at the exit of the ribosomal tunnel. uS2 is required for the assembly and/or stability of the 40S ribosomal subunit. Required for the processing of the 20S rRNA-precursor to mature 18S rRNA in a late step of the maturation of 40S ribosomal subunits. This chain is Small ribosomal subunit protein uS11, found in Neurospora crassa (strain ATCC 24698 / 74-OR23-1A / CBS 708.71 / DSM 1257 / FGSC 987).